The primary structure comprises 176 residues: NAD(P)H-quinone oxidoreductase subunit 6, chloroplastic (176 aa).

A run of 5 helical transmembrane segments spans residues 10 to 30, 32 to 52, 60 to 80, 107 to 127, and 152 to 172; these read FLLV…VLLT, PIFS…FHIP, AAQL…AVMF, IFVS…IWTT, and FFLP…GAIA.

It belongs to the complex I subunit 6 family. NDH is composed of at least 16 different subunits, 5 of which are encoded in the nucleus.

Its subcellular location is the plastid. It localises to the chloroplast thylakoid membrane. It catalyses the reaction a plastoquinone + NADH + (n+1) H(+)(in) = a plastoquinol + NAD(+) + n H(+)(out). The catalysed reaction is a plastoquinone + NADPH + (n+1) H(+)(in) = a plastoquinol + NADP(+) + n H(+)(out). Its function is as follows. NDH shuttles electrons from NAD(P)H:plastoquinone, via FMN and iron-sulfur (Fe-S) centers, to quinones in the photosynthetic chain and possibly in a chloroplast respiratory chain. The immediate electron acceptor for the enzyme in this species is believed to be plastoquinone. Couples the redox reaction to proton translocation, and thus conserves the redox energy in a proton gradient. In Buxus microphylla (Littleleaf boxwood), this protein is NAD(P)H-quinone oxidoreductase subunit 6, chloroplastic (ndhG).